Consider the following 638-residue polypeptide: Chaperone protein DnaK (638 aa).

At T200 the chain carries Phosphothreonine; by autocatalysis. The segment at 598–621 (SLHMAATAEQQSGSTGAGAGASAK) is disordered.

It belongs to the heat shock protein 70 family.

Acts as a chaperone. The polypeptide is Chaperone protein DnaK (Xylella fastidiosa (strain M23)).